The primary structure comprises 154 residues: MESHTMLSAQSRWRNAMADTFAMVVYCTVVNMLIEIFLSGMSFEQSLSSRLVAIPVNILIACPYGIYRDFFMRQARKMNNKGWTKTIADILAYVTFQSPVYAAILWVIGADWHQIVAAVSSNMVISMMMGAVYGYFLDYCRRLFKVTSYQQLKA.

Helical transmembrane passes span 21-41, 51-71, 90-110, and 115-135; these read FAMVVYCTVVNMLIEIFLSGM, LVAIPVNILIACPYGIYRDFF, ILAYVTFQSPVYAAILWVIGA, and IVAAVSSNMVISMMMGAVYGY.

The protein belongs to the AlaE exporter family.

Its subcellular location is the cell inner membrane. Its function is as follows. Exports L-alanine. This Escherichia fergusonii (strain ATCC 35469 / DSM 13698 / CCUG 18766 / IAM 14443 / JCM 21226 / LMG 7866 / NBRC 102419 / NCTC 12128 / CDC 0568-73) protein is L-alanine exporter AlaE.